Here is a 342-residue protein sequence, read N- to C-terminus: Methionine import ATP-binding protein MetN 2 (342 aa).

An ABC transporter domain is found at 2 to 241 (ISIEGLSKVF…PKQLVTRKFV (240 aa)). 38–45 (GYSGAGKS) is a binding site for ATP.

The protein belongs to the ABC transporter superfamily. Methionine importer (TC 3.A.1.24) family. As to quaternary structure, the complex is composed of two ATP-binding proteins (MetN), two transmembrane proteins (MetI) and a solute-binding protein (MetQ).

Its subcellular location is the cell membrane. The catalysed reaction is L-methionine(out) + ATP + H2O = L-methionine(in) + ADP + phosphate + H(+). It catalyses the reaction D-methionine(out) + ATP + H2O = D-methionine(in) + ADP + phosphate + H(+). Functionally, part of the ABC transporter complex MetNIQ involved in methionine import. Responsible for energy coupling to the transport system. This chain is Methionine import ATP-binding protein MetN 2, found in Oceanobacillus iheyensis (strain DSM 14371 / CIP 107618 / JCM 11309 / KCTC 3954 / HTE831).